Here is a 457-residue protein sequence, read N- to C-terminus: UDP-N-acetylmuramate--L-alanine ligase (457 aa).

109–115 provides a ligand contact to ATP; the sequence is GTDGKTT.

It belongs to the MurCDEF family.

Its subcellular location is the cytoplasm. The catalysed reaction is UDP-N-acetyl-alpha-D-muramate + L-alanine + ATP = UDP-N-acetyl-alpha-D-muramoyl-L-alanine + ADP + phosphate + H(+). Its pathway is cell wall biogenesis; peptidoglycan biosynthesis. Its function is as follows. Cell wall formation. This Thermotoga petrophila (strain ATCC BAA-488 / DSM 13995 / JCM 10881 / RKU-1) protein is UDP-N-acetylmuramate--L-alanine ligase.